A 156-amino-acid polypeptide reads, in one-letter code: MDINITLIGQMITFAIFVGFTMKFVWPPLRKALDERREKIAEGLASADRASRELEVAKRQSAEILREAKAKATEIVENAYVRAHKVDEQAKEEAIAAADKIKSMAMAEIEQEKVKAKEELKHEVVSLAMAAASKIISANVDEQSSKKILKDFVEKV.

Residues 5-27 traverse the membrane as a helical segment; it reads ITLIGQMITFAIFVGFTMKFVWP.

The protein belongs to the ATPase B chain family. F-type ATPases have 2 components, F(1) - the catalytic core - and F(0) - the membrane proton channel. F(1) has five subunits: alpha(3), beta(3), gamma(1), delta(1), epsilon(1). F(0) has three main subunits: a(1), b(2) and c(10-14). The alpha and beta chains form an alternating ring which encloses part of the gamma chain. F(1) is attached to F(0) by a central stalk formed by the gamma and epsilon chains, while a peripheral stalk is formed by the delta and b chains.

The protein localises to the cell inner membrane. Functionally, f(1)F(0) ATP synthase produces ATP from ADP in the presence of a proton or sodium gradient. F-type ATPases consist of two structural domains, F(1) containing the extramembraneous catalytic core and F(0) containing the membrane proton channel, linked together by a central stalk and a peripheral stalk. During catalysis, ATP synthesis in the catalytic domain of F(1) is coupled via a rotary mechanism of the central stalk subunits to proton translocation. Component of the F(0) channel, it forms part of the peripheral stalk, linking F(1) to F(0). The sequence is that of ATP synthase subunit b from Francisella philomiragia subsp. philomiragia (strain ATCC 25017 / CCUG 19701 / FSC 153 / O#319-036).